Here is a 124-residue protein sequence, read N- to C-terminus: Fluoride-specific ion channel FluC (124 aa).

4 consecutive transmembrane segments (helical) span residues 4–24 (IFYI…TTLV), 35–55 (YATF…FGYL), 63–83 (PYLK…FSAF), and 96–116 (ILIA…ATWT). G75 and T78 together coordinate Na(+).

This sequence belongs to the fluoride channel Fluc/FEX (TC 1.A.43) family.

The protein localises to the cell inner membrane. It catalyses the reaction fluoride(in) = fluoride(out). Its activity is regulated as follows. Na(+) is not transported, but it plays an essential structural role and its presence is essential for fluoride channel function. In terms of biological role, fluoride-specific ion channel. Important for reducing fluoride concentration in the cell, thus reducing its toxicity. This is Fluoride-specific ion channel FluC from Flavobacterium psychrophilum (strain ATCC 49511 / DSM 21280 / CIP 103535 / JIP02/86).